Consider the following 301-residue polypeptide: Glycine--tRNA ligase alpha subunit (301 aa).

This sequence belongs to the class-II aminoacyl-tRNA synthetase family. In terms of assembly, tetramer of two alpha and two beta subunits.

The protein localises to the cytoplasm. It catalyses the reaction tRNA(Gly) + glycine + ATP = glycyl-tRNA(Gly) + AMP + diphosphate. This chain is Glycine--tRNA ligase alpha subunit, found in Shewanella frigidimarina (strain NCIMB 400).